A 120-amino-acid chain; its full sequence is Histone H3-like centromeric protein cnp1 (120 aa).

Positions methionine 1–threonine 26 are disordered. The interval isoleucine 14 to alanine 120 is H3-like.

Belongs to the histone H3 family. In terms of assembly, component of centromeric nucleosomes, where DNA is wrapped around a histone octamer core. The octamer contains two molecules each of H2A, H2B, cnp1/CENPA and H4 assembled in one cnp1-H4 heterotetramer and two H2A-H2B heterodimers. Interacts with the inner kinetochore. Component of centromeric nucleosomes. Interacts with mis6. Interacts with sim4. In terms of processing, ubiquitinated. Is degraded through ubiquitin-mediated proteolysis when not protected by its association to the kinetochore.

The protein localises to the nucleus. The protein resides in the chromosome. Its subcellular location is the centromere. Functionally, histone H3-like nucleosomal protein that is specifically found in centromeric nucleosomes. Replaces conventional H3 in the nucleosome core of centromeric chromatin that serves as an assembly site for the inner kinetochore. Required for recruitment and assembly of kinetochore proteins, mitotic progression and chromosome segregation. May serve as an epigenetic mark that propagates centromere identity through replication and cell division. The chain is Histone H3-like centromeric protein cnp1 (cnp1) from Schizosaccharomyces pombe (strain 972 / ATCC 24843) (Fission yeast).